Here is a 122-residue protein sequence, read N- to C-terminus: Large ribosomal subunit protein uL14 (122 aa).

Belongs to the universal ribosomal protein uL14 family. Part of the 50S ribosomal subunit. Forms a cluster with proteins L3 and L19. In the 70S ribosome, L14 and L19 interact and together make contacts with the 16S rRNA in bridges B5 and B8.

In terms of biological role, binds to 23S rRNA. Forms part of two intersubunit bridges in the 70S ribosome. The chain is Large ribosomal subunit protein uL14 from Solidesulfovibrio magneticus (strain ATCC 700980 / DSM 13731 / RS-1) (Desulfovibrio magneticus).